We begin with the raw amino-acid sequence, 558 residues long: Glucose-6-phosphate isomerase (558 aa).

Ala-2 bears the N-acetylalanine mark. Lys-12 bears the N6-acetyllysine mark. The residue at position 34 (Lys-34) is an N6-(2-hydroxyisobutyryl)lysine. Ser-107 is subject to Phosphoserine. At Thr-109 the chain carries Phosphothreonine. An N6-acetyllysine modification is found at Lys-142. Residue 159 to 160 coordinates D-glucose 6-phosphate; it reads GS. The residue at position 185 (Ser-185) is a Phosphoserine; by CK2. 210 to 215 provides a ligand contact to D-glucose 6-phosphate; the sequence is SKTFTT. Phosphothreonine is present on Thr-250. D-glucose 6-phosphate-binding residues include Gln-354, Glu-358, and His-389. Glu-358 serves as the catalytic Proton donor. Residue His-389 is part of the active site. An N6-acetyllysine; alternate modification is found at Lys-454. Lys-454 carries the N6-malonyllysine; alternate modification. Lys-454 bears the N6-succinyllysine; alternate mark. Phosphoserine is present on Ser-455. Lys-519 lines the D-glucose 6-phosphate pocket. Residue Lys-519 is part of the active site.

The protein belongs to the GPI family. In terms of assembly, homodimer; in the catalytically active form. Monomer in the secreted form. Post-translationally, phosphorylation at Ser-185 by CK2 has been shown to decrease enzymatic activity and may contribute to secretion by a non-classical secretory pathway. In terms of processing, ISGylated.

It localises to the cytoplasm. It is found in the secreted. The enzyme catalyses alpha-D-glucose 6-phosphate = beta-D-fructose 6-phosphate. It functions in the pathway carbohydrate degradation; glycolysis; D-glyceraldehyde 3-phosphate and glycerone phosphate from D-glucose: step 2/4. In terms of biological role, in the cytoplasm, catalyzes the conversion of glucose-6-phosphate to fructose-6-phosphate, the second step in glycolysis, and the reverse reaction during gluconeogenesis. Besides it's role as a glycolytic enzyme, also acts as a secreted cytokine: acts as an angiogenic factor (AMF) that stimulates endothelial cell motility. Acts as a neurotrophic factor, neuroleukin, for spinal and sensory neurons. It is secreted by lectin-stimulated T-cells and induces immunoglobulin secretion. This Macaca fascicularis (Crab-eating macaque) protein is Glucose-6-phosphate isomerase.